The following is a 444-amino-acid chain: Elongation factor 1-alpha (444 aa).

The tr-type G domain maps to 15–236 (KPHLNLAVIG…ALDTFQPPPR (222 aa)). The segment at 24–31 (GHVDNGKS) is G1. Position 24-31 (24-31 (GHVDNGKS)) interacts with GTP. Residue S31 participates in Mg(2+) binding. Residues 80–84 (GVTIE) are G2. The G3 stretch occupies residues 101–104 (DLPG). Residues 101 to 105 (DLPGH) and 163 to 166 (NKMD) each bind GTP. Positions 163–166 (NKMD) are G4. The G5 stretch occupies residues 202–204 (SAI).

Belongs to the TRAFAC class translation factor GTPase superfamily. Classic translation factor GTPase family. EF-Tu/EF-1A subfamily.

It is found in the cytoplasm. The catalysed reaction is GTP + H2O = GDP + phosphate + H(+). In terms of biological role, GTP hydrolase that promotes the GTP-dependent binding of aminoacyl-tRNA to the A-site of ribosomes during protein biosynthesis. The protein is Elongation factor 1-alpha of Pyrobaculum islandicum (strain DSM 4184 / JCM 9189 / GEO3).